The primary structure comprises 181 residues: MGCCTGRCSLVCLCALQLLSALERQIFDFLGFQWAPILGNFLHIIVVILGLFGTIQYRPRYIMVYTVWTALWVTWNVFIICFYLEVGGLSKDTDLMTFNISVHRSWWREHGPGCVRRVLPPSAHGMMDDYTYVSVTGCVVDFQYLEVIHSAVQILLSLVGFVYACYVISISMEEEDTCRNK.

4 helical membrane passes run 2-22, 35-55, 62-82, and 152-172; these read GCCT…LSAL, APIL…FGTI, IMVY…IICF, and VQIL…SISM.

It belongs to the NKAIN family. Interacts with ATP1B1. As to expression, detected in the brain only and specifically in neurons. Expressed in multiple regions such as cerebral cortex, thalamus, hippocampus, olfactory bulb and brainstem as well as in cerebellum with low expression in granular cell layer.

The protein resides in the cell membrane. In Mus musculus (Mouse), this protein is Sodium/potassium-transporting ATPase subunit beta-1-interacting protein 3 (Nkain3).